Here is a 163-residue protein sequence, read N- to C-terminus: Ribonuclease H (163 aa).

In terms of domain architecture, RNase H type-1 spans 4-146; it reads SPKKVLIYTD…CDRLAVRASQ (143 aa). Residues D13, E51, D73, and D138 each contribute to the Mg(2+) site.

This sequence belongs to the RNase H family. In terms of assembly, monomer. The cofactor is Mg(2+).

The protein localises to the cytoplasm. It carries out the reaction Endonucleolytic cleavage to 5'-phosphomonoester.. Its function is as follows. Endonuclease that specifically degrades the RNA of RNA-DNA hybrids. This is Ribonuclease H from Rippkaea orientalis (strain PCC 8801 / RF-1) (Cyanothece sp. (strain PCC 8801)).